We begin with the raw amino-acid sequence, 595 residues long: NADH-quinone oxidoreductase subunit C/D (595 aa).

The NADH dehydrogenase I subunit C stretch occupies residues 1 to 186 (MAETDIAMPE…TPYMQDKAKQ (186 aa)). The segment at 210-595 (DFMFLNLGPN…IDVVMADVDR (386 aa)) is NADH dehydrogenase I subunit D.

In the N-terminal section; belongs to the complex I 30 kDa subunit family. This sequence in the C-terminal section; belongs to the complex I 49 kDa subunit family. In terms of assembly, NDH-1 is composed of 13 different subunits. Subunits NuoB, CD, E, F, and G constitute the peripheral sector of the complex.

It is found in the cell inner membrane. The catalysed reaction is a quinone + NADH + 5 H(+)(in) = a quinol + NAD(+) + 4 H(+)(out). Functionally, NDH-1 shuttles electrons from NADH, via FMN and iron-sulfur (Fe-S) centers, to quinones in the respiratory chain. The immediate electron acceptor for the enzyme in this species is believed to be ubiquinone. Couples the redox reaction to proton translocation (for every two electrons transferred, four hydrogen ions are translocated across the cytoplasmic membrane), and thus conserves the redox energy in a proton gradient. The chain is NADH-quinone oxidoreductase subunit C/D from Acinetobacter baumannii (strain AYE).